An 831-amino-acid polypeptide reads, in one-letter code: Periplasmic nitrate reductase (831 aa).

Residues 1 to 29 (MTVTRRDFVRHQALATAAAAAGVAVPAAA) constitute a signal peptide (tat-type signal). The 4Fe-4S Mo/W bis-MGD-type domain occupies 41–97 (LVWSKAPCRFCGTGCSVNVATKEGRVVATHGDIKSPVNRGLNCVKGYFLSKVMYGED). 4 residues coordinate [4Fe-4S] cluster: C48, C51, C55, and C83. Residues K85, Q152, N177, C181, 214 to 221 (WGSNMAEM), 245 to 249 (STYEH), 264 to 266 (QSD), M375, Q379, N485, 511 to 512 (SD), K534, D561, and 721 to 730 (TGRVIEHWHS) each bind Mo-bis(molybdopterin guanine dinucleotide). W797 contributes to the substrate binding site. Mo-bis(molybdopterin guanine dinucleotide) is bound by residues N805 and K822.

This sequence belongs to the prokaryotic molybdopterin-containing oxidoreductase family. NasA/NapA/NarB subfamily. Component of the periplasmic nitrate reductase NapAB complex composed of NapA and NapB. The cofactor is [4Fe-4S] cluster. Mo-bis(molybdopterin guanine dinucleotide) serves as cofactor. Post-translationally, predicted to be exported by the Tat system. The position of the signal peptide cleavage has not been experimentally proven.

It is found in the periplasm. It catalyses the reaction 2 Fe(II)-[cytochrome] + nitrate + 2 H(+) = 2 Fe(III)-[cytochrome] + nitrite + H2O. Its function is as follows. Catalytic subunit of the periplasmic nitrate reductase complex NapAB. Receives electrons from NapB and catalyzes the reduction of nitrate to nitrite. The polypeptide is Periplasmic nitrate reductase (Saccharophagus degradans (strain 2-40 / ATCC 43961 / DSM 17024)).